Consider the following 177-residue polypeptide: Large ribosomal subunit protein uL6 (177 aa).

This sequence belongs to the universal ribosomal protein uL6 family. In terms of assembly, part of the 50S ribosomal subunit.

Its function is as follows. This protein binds to the 23S rRNA, and is important in its secondary structure. It is located near the subunit interface in the base of the L7/L12 stalk, and near the tRNA binding site of the peptidyltransferase center. The polypeptide is Large ribosomal subunit protein uL6 (Halorhodospira halophila (strain DSM 244 / SL1) (Ectothiorhodospira halophila (strain DSM 244 / SL1))).